The following is a 475-amino-acid chain: Ribulose bisphosphate carboxylase large chain (475 aa).

The propeptide occupies 1 to 2; sequence MS. N-acetylproline is present on proline 3. Lysine 14 carries the N6,N6,N6-trimethyllysine modification. Substrate-binding residues include asparagine 123 and threonine 173. The Proton acceptor role is filled by lysine 175. Lysine 177 provides a ligand contact to substrate. Positions 201, 203, and 204 each coordinate Mg(2+). Residue lysine 201 is modified to N6-carboxylysine. The Proton acceptor role is filled by histidine 294. Substrate is bound by residues arginine 295, histidine 327, and serine 379.

It belongs to the RuBisCO large chain family. Type I subfamily. Heterohexadecamer of 8 large chains and 8 small chains; disulfide-linked. The disulfide link is formed within the large subunit homodimers. Mg(2+) is required as a cofactor. The disulfide bond which can form in the large chain dimeric partners within the hexadecamer appears to be associated with oxidative stress and protein turnover.

The protein resides in the plastid. It is found in the chloroplast. It carries out the reaction 2 (2R)-3-phosphoglycerate + 2 H(+) = D-ribulose 1,5-bisphosphate + CO2 + H2O. The catalysed reaction is D-ribulose 1,5-bisphosphate + O2 = 2-phosphoglycolate + (2R)-3-phosphoglycerate + 2 H(+). In terms of biological role, ruBisCO catalyzes two reactions: the carboxylation of D-ribulose 1,5-bisphosphate, the primary event in carbon dioxide fixation, as well as the oxidative fragmentation of the pentose substrate in the photorespiration process. Both reactions occur simultaneously and in competition at the same active site. This is Ribulose bisphosphate carboxylase large chain from Vitis vinifera (Grape).